A 274-amino-acid polypeptide reads, in one-letter code: Large ribosomal subunit protein uL2 (274 aa).

Residues 223 to 274 (VVMNPVDHPHGGGEGRTSGGRHPVSPWGVPTKGFKTRKNKRTDKYIVRRRTK) are disordered. Residues 256-274 (FKTRKNKRTDKYIVRRRTK) are compositionally biased toward basic residues.

Belongs to the universal ribosomal protein uL2 family. As to quaternary structure, part of the 50S ribosomal subunit. Forms a bridge to the 30S subunit in the 70S ribosome.

One of the primary rRNA binding proteins. Required for association of the 30S and 50S subunits to form the 70S ribosome, for tRNA binding and peptide bond formation. It has been suggested to have peptidyltransferase activity; this is somewhat controversial. Makes several contacts with the 16S rRNA in the 70S ribosome. This chain is Large ribosomal subunit protein uL2, found in Vibrio atlanticus (strain LGP32) (Vibrio splendidus (strain Mel32)).